The primary structure comprises 440 residues: Acetylornithine deacetylase (440 aa).

Position 101 (H101) interacts with Zn(2+). D103 is a catalytic residue. Zn(2+) is bound at residue D133. E167 acts as the Proton acceptor in catalysis. Residues E168 and H412 each coordinate Zn(2+).

Belongs to the peptidase M20A family. ArgE subfamily. Homodimer. The cofactor is Zn(2+). Co(2+) is required as a cofactor.

It catalyses the reaction N(2)-acetyl-L-ornithine + H2O = L-ornithine + acetate. It functions in the pathway amino-acid biosynthesis; L-arginine biosynthesis; L-ornithine from N(2)-acetyl-L-ornithine (linear): step 1/1. The protein is Acetylornithine deacetylase of Arabidopsis thaliana (Mouse-ear cress).